A 100-amino-acid chain; its full sequence is Small ribosomal subunit protein uS14 (100 aa).

Belongs to the universal ribosomal protein uS14 family. As to quaternary structure, part of the 30S ribosomal subunit. Contacts proteins S3 and S10.

Functionally, binds 16S rRNA, required for the assembly of 30S particles and may also be responsible for determining the conformation of the 16S rRNA at the A site. This is Small ribosomal subunit protein uS14 from Prochlorococcus marinus (strain MIT 9303).